The following is a 109-amino-acid chain: Large ribosomal subunit protein uL22 (109 aa).

It belongs to the universal ribosomal protein uL22 family. In terms of assembly, part of the 50S ribosomal subunit.

Its function is as follows. This protein binds specifically to 23S rRNA; its binding is stimulated by other ribosomal proteins, e.g. L4, L17, and L20. It is important during the early stages of 50S assembly. It makes multiple contacts with different domains of the 23S rRNA in the assembled 50S subunit and ribosome. The globular domain of the protein is located near the polypeptide exit tunnel on the outside of the subunit, while an extended beta-hairpin is found that lines the wall of the exit tunnel in the center of the 70S ribosome. This is Large ribosomal subunit protein uL22 from Psychrobacter sp. (strain PRwf-1).